The chain runs to 129 residues: Follitropin subunit beta (129 aa).

The first 19 residues, 1–19, serve as a signal peptide directing secretion; it reads MKSVQFCFLFCCWRAICCR. 6 disulfide bridges follow: Cys21/Cys69, Cys35/Cys84, Cys38/Cys122, Cys46/Cys100, Cys50/Cys102, and Cys105/Cys112. N-linked (GlcNAc...) asparagine glycans are attached at residues Asn25 and Asn42.

Belongs to the glycoprotein hormones subunit beta family. As to quaternary structure, heterodimer. The active follitropin is a heterodimer composed of an alpha chain/CGA shared with other hormones and a unique beta chain/FSHB shown here.

The protein localises to the secreted. In terms of biological role, together with the alpha chain CGA constitutes follitropin, the follicle-stimulating hormone, and provides its biological specificity to the hormone heterodimer. Binds FSHR, a G protein-coupled receptor, on target cells to activate downstream signaling pathways. Follitropin is involved in follicle development and spermatogenesis in reproductive organs. The polypeptide is Follitropin subunit beta (FSHB) (Ovis aries (Sheep)).